The chain runs to 412 residues: Glucose-1-phosphate adenylyltransferase (412 aa).

Alpha-D-glucose 1-phosphate is bound by residues Gly163, 179 to 180 (EK), and Ser197.

The protein belongs to the bacterial/plant glucose-1-phosphate adenylyltransferase family. Homotetramer.

The catalysed reaction is alpha-D-glucose 1-phosphate + ATP + H(+) = ADP-alpha-D-glucose + diphosphate. It functions in the pathway glycan biosynthesis; glycogen biosynthesis. Its function is as follows. Involved in the biosynthesis of ADP-glucose, a building block required for the elongation reactions to produce glycogen. Catalyzes the reaction between ATP and alpha-D-glucose 1-phosphate (G1P) to produce pyrophosphate and ADP-Glc. In Frankia casuarinae (strain DSM 45818 / CECT 9043 / HFP020203 / CcI3), this protein is Glucose-1-phosphate adenylyltransferase.